Consider the following 274-residue polypeptide: Large ribosomal subunit protein uL2 (274 aa).

A disordered region spans residues glycine 222 to glycine 274. Positions aspartate 229–glycine 239 are enriched in basic and acidic residues.

The protein belongs to the universal ribosomal protein uL2 family. As to quaternary structure, part of the 50S ribosomal subunit. Forms a bridge to the 30S subunit in the 70S ribosome.

Functionally, one of the primary rRNA binding proteins. Required for association of the 30S and 50S subunits to form the 70S ribosome, for tRNA binding and peptide bond formation. It has been suggested to have peptidyltransferase activity; this is somewhat controversial. Makes several contacts with the 16S rRNA in the 70S ribosome. The sequence is that of Large ribosomal subunit protein uL2 from Thermosipho melanesiensis (strain DSM 12029 / CIP 104789 / BI429).